Consider the following 397-residue polypeptide: Phosphoglycerate kinase (397 aa).

Substrate contacts are provided by residues 21 to 23 (DFN), R36, 59 to 62 (HCGR), R118, and R151. ATP contacts are provided by residues K201, E323, and 353 to 356 (GGDT).

The protein belongs to the phosphoglycerate kinase family. Monomer.

The protein resides in the cytoplasm. The enzyme catalyses (2R)-3-phosphoglycerate + ATP = (2R)-3-phospho-glyceroyl phosphate + ADP. It functions in the pathway carbohydrate degradation; glycolysis; pyruvate from D-glyceraldehyde 3-phosphate: step 2/5. This chain is Phosphoglycerate kinase, found in Bartonella quintana (strain Toulouse) (Rochalimaea quintana).